The following is a 373-amino-acid chain: Phospho-N-acetylmuramoyl-pentapeptide-transferase (373 aa).

11 helical membrane-spanning segments follow: residues 16 to 36 (WWTK…AASF), 46 to 66 (LLSL…SWGI), 93 to 113 (PTMG…FVSV), 120 to 140 (QLLA…FDDW), 157 to 177 (LLLQ…QHWI), 185 to 205 (LGIS…VFLA), 216 to 236 (LDGL…VQLM), 242 to 262 (GNPV…GFLM), 270 to 290 (VFMG…VAIL), 298 to 318 (LVMG…VWVF), and 350 to 369 (MVVR…GLLL).

This sequence belongs to the glycosyltransferase 4 family. MraY subfamily. It depends on Mg(2+) as a cofactor.

It is found in the cell inner membrane. The catalysed reaction is UDP-N-acetyl-alpha-D-muramoyl-L-alanyl-gamma-D-glutamyl-meso-2,6-diaminopimeloyl-D-alanyl-D-alanine + di-trans,octa-cis-undecaprenyl phosphate = di-trans,octa-cis-undecaprenyl diphospho-N-acetyl-alpha-D-muramoyl-L-alanyl-D-glutamyl-meso-2,6-diaminopimeloyl-D-alanyl-D-alanine + UMP. The protein operates within cell wall biogenesis; peptidoglycan biosynthesis. In terms of biological role, catalyzes the initial step of the lipid cycle reactions in the biosynthesis of the cell wall peptidoglycan: transfers peptidoglycan precursor phospho-MurNAc-pentapeptide from UDP-MurNAc-pentapeptide onto the lipid carrier undecaprenyl phosphate, yielding undecaprenyl-pyrophosphoryl-MurNAc-pentapeptide, known as lipid I. This is Phospho-N-acetylmuramoyl-pentapeptide-transferase from Prochlorococcus marinus (strain MIT 9313).